We begin with the raw amino-acid sequence, 627 residues long: Glycerophosphodiester phosphodiesterase domain-containing protein 4 (627 aa).

At 1–17 (MLLFLWIETSNEYFNFD) the chain is on the cytoplasmic side. The chain crosses the membrane as a helical span at residues 18–38 (WVIFLGTGYWFYWSIFILSLA). Position 39 (Gly39) is a topological domain, extracellular. Residues 40-60 (ILTAYSSLLLLLGLLLLWEGI) form a helical membrane-spanning segment. The Cytoplasmic segment spans residues 61–69 (ELYLHLCHK). The chain crosses the membrane as a helical span at residues 70–90 (ILILLVILPCVILMFIICKFW). The Extracellular segment spans residues 91–107 (KERWLVAGLSLQIFAPY). The helical transmembrane segment at 108 to 128 (VHLVSITVMVILFWPVAIYVA) threads the bilayer. The Cytoplasmic segment spans residues 129–162 (RLEREVRMRRYRMTHSEKKRLKKCNVIARLRGLQ). The helical transmembrane segment at 163–183 (VAVGLPFLLIFLSLCLMPLGI) threads the bilayer. At 184 to 468 (YSPCIQEKEN…PHFFMTPKFY (285 aa)) the chain is on the extracellular side. One can recognise a GP-PDE domain in the interval 198–457 (PTLFGHRGAP…DNIGLLSQLN (260 aa)). A divalent metal cation contacts are provided by Glu230, Asp232, and His245. 2 N-linked (GlcNAc...) asparagine glycosylation sites follow: Asn308 and Asn397. The helical transmembrane segment at 469–489 (MFIWLLVDIISVLFIVAIFCF) threads the bilayer. The Cytoplasmic portion of the chain corresponds to 490–627 (HWRRETIKEK…TMPSVEVPYP (138 aa)).

This sequence belongs to the glycerophosphoryl diester phosphodiesterase family.

The protein localises to the membrane. The polypeptide is Glycerophosphodiester phosphodiesterase domain-containing protein 4 (GDPD4) (Macaca fascicularis (Crab-eating macaque)).